Here is a 78-residue protein sequence, read N- to C-terminus: UPF0270 protein YE3952 (78 aa).

It belongs to the UPF0270 family.

The chain is UPF0270 protein YE3952 from Yersinia enterocolitica serotype O:8 / biotype 1B (strain NCTC 13174 / 8081).